Consider the following 827-residue polypeptide: uncharacterized protein (827 aa).

This is an uncharacterized protein from Methanocaldococcus jannaschii (strain ATCC 43067 / DSM 2661 / JAL-1 / JCM 10045 / NBRC 100440) (Methanococcus jannaschii).